The primary structure comprises 1127 residues: Major DNA-binding protein (1127 aa).

Residues 1098–1127 are required for nuclear localization; that stretch reads QVKLTSMDHSGKVVGGKKRKIATMFDDLDL.

This sequence belongs to the herpesviridae major DNA-binding protein family. Homooligomers. Forms double-helical filaments necessary for the formation of replication compartments within the host nucleus. Interacts with the origin-binding protein. Interacts with the helicase primase complex; this interaction stimulates primer synthesis activity of the helicase-primase complex. Interacts with the DNA polymerase. Interacts with the alkaline exonuclease; this interaction increases its nuclease processivity.

It localises to the host nucleus. In terms of biological role, plays several crucial roles in viral infection. Participates in the opening of the viral DNA origin to initiate replication by interacting with the origin-binding protein. May disrupt loops, hairpins and other secondary structures present on ssDNA to reduce and eliminate pausing of viral DNA polymerase at specific sites during elongation. Promotes viral DNA recombination by performing strand-transfer, characterized by the ability to transfer a DNA strand from a linear duplex to a complementary single-stranded DNA circle. Can also catalyze the renaturation of complementary single strands. Additionally, reorganizes the host cell nucleus, leading to the formation of prereplicative sites and replication compartments. This process is driven by the protein which can form double-helical filaments in the absence of DNA. The polypeptide is Major DNA-binding protein (Alcelaphine herpesvirus 1 (strain C500) (AlHV-1)).